Reading from the N-terminus, the 239-residue chain is Alpha-acetolactate decarboxylase (239 aa).

Belongs to the alpha-acetolactate decarboxylase family.

It catalyses the reaction (2S)-2-acetolactate + H(+) = (R)-acetoin + CO2. The protein operates within polyol metabolism; (R,R)-butane-2,3-diol biosynthesis; (R,R)-butane-2,3-diol from pyruvate: step 2/3. With respect to regulation, the enzyme is active only in the presence of branched-chain amino acids. Valine results in much higher activation than leucine or isoleucine. Its function is as follows. Converts acetolactate into acetoin. Regulates leucine and valine biosynthesis by diverting the flux of alpha-acetolactate towards acetoin when the branched-chain amino acids are present in high concentration. This Streptococcus thermophilus protein is Alpha-acetolactate decarboxylase (aldC).